A 683-amino-acid chain; its full sequence is uncharacterized protein (683 aa).

Coiled coils occupy residues 62–124, 155–259, and 346–376; these read PEHY…RKER, TTTN…KLSQ, and KKSLLTVKDSVQSLKTQLDELKRTLENDGDV. Residues 213–237 are disordered; the sequence is QDQVESQTGPKKRRKSPIENQPTAG.

This is an uncharacterized protein from Invertebrate iridescent virus 3 (IIV-3).